The chain runs to 223 residues: uncharacterized protein (223 aa).

The protein resides in the plastid. Its subcellular location is the chloroplast. This is an uncharacterized protein from Mesostigma viride (Green alga).